The sequence spans 356 residues: Tyrosine recombinase XerS (356 aa).

One can recognise a Core-binding (CB) domain in the interval 16-121; the sequence is IMPSYVLEYY…ALSSLYKYLT (106 aa). The Tyr recombinase domain maps to 169-354; the sequence is GFLDYIDNEY…INEEQKNALD (186 aa). Residues arginine 210, lysine 234, histidine 306, arginine 309, and histidine 332 contribute to the active site. Residue tyrosine 341 is the O-(3'-phospho-DNA)-tyrosine intermediate of the active site.

The protein belongs to the 'phage' integrase family. XerS subfamily.

The protein localises to the cytoplasm. FtsK is required for recombination. Site-specific tyrosine recombinase, which acts by catalyzing the cutting and rejoining of the recombining DNA molecules. Essential to convert dimers of the bacterial chromosome into monomers to permit their segregation at cell division. This is Tyrosine recombinase XerS from Lactococcus lactis subsp. lactis (strain IL1403) (Streptococcus lactis).